The chain runs to 463 residues: Cytochrome P450 4d8 (463 aa).

Heme contacts are provided by Glu267 and Cys409.

This sequence belongs to the cytochrome P450 family. The cofactor is heme.

Its subcellular location is the endoplasmic reticulum membrane. It is found in the microsome membrane. Functionally, may be involved in the metabolism of insect hormones and in the breakdown of synthetic insecticides. The protein is Cytochrome P450 4d8 (Cyp4d8) of Drosophila melanogaster (Fruit fly).